Reading from the N-terminus, the 144-residue chain is 3-hydroxyacyl-[acyl-carrier-protein] dehydratase FabZ (144 aa).

H51 is a catalytic residue.

It belongs to the thioester dehydratase family. FabZ subfamily.

Its subcellular location is the cytoplasm. It catalyses the reaction a (3R)-hydroxyacyl-[ACP] = a (2E)-enoyl-[ACP] + H2O. Its function is as follows. Involved in unsaturated fatty acids biosynthesis. Catalyzes the dehydration of short chain beta-hydroxyacyl-ACPs and long chain saturated and unsaturated beta-hydroxyacyl-ACPs. This is 3-hydroxyacyl-[acyl-carrier-protein] dehydratase FabZ from Clostridium botulinum (strain Loch Maree / Type A3).